Consider the following 372-residue polypeptide: Putative glutamate--cysteine ligase 2 (372 aa).

It belongs to the glutamate--cysteine ligase type 2 family. YbdK subfamily. As to quaternary structure, homodimer.

It carries out the reaction L-cysteine + L-glutamate + ATP = gamma-L-glutamyl-L-cysteine + ADP + phosphate + H(+). ATP-dependent carboxylate-amine ligase which exhibits weak glutamate--cysteine ligase activity. This Escherichia coli (strain K12 / MC4100 / BW2952) protein is Putative glutamate--cysteine ligase 2 (ybdK).